Consider the following 504-residue polypeptide: MKNEKRKTGIEPKVFFPPLIIVGILCWLTVRDLDAANVVINAVFSYVTNVWGWAFEWYMVVMLFGWFWLVFGPYAKKRLGNEPPEFSTASWIFMMFASCTSAAVLFWGSIEIYYYISTPPFGLEPNSTGAKELGLAYSLFHWGPLPWATYSFLSVAFAYFFFVRKMEVIRPSSTLVPLVGEKHAKGLFGTIVDNFYLVALIFAMGTSLGLATPLVTECMQWLFGIPHTLQLDAIIITCWIILNAICVACGLQKGVRIASDVRSYLSFLMLGWVFIVSGASFIMNYFTDSVGMLLMYLPRMLFYTDPIAKGGFPQGWTVFYWAWWVIYAIQMSIFLARISRGRTVRELCFGMVLGLTASTWILWTVLGSNTLLLIDKNIINIPNLIEQYGVARAIIETWAALPLSTATIWGFFILCFIATVTLVNACSYTLAMSTCREVRDGEEPPLLVRIGWSILVGIIGIVLLALGGLKPIQTAIIAGGCPLFFVNIMVTLSFIKDAKQNWKD.

The next 12 membrane-spanning stretches (helical) occupy residues 10–30 (IEPKVFFPPLIIVGILCWLTV), 51–71 (WGWAFEWYMVVMLFGWFWLVF), 92–112 (IFMMFASCTSAAVLFWGSIEI), 143–163 (GPLPWATYSFLSVAFAYFFFV), 195–215 (FYLVALIFAMGTSLGLATPLV), 231–251 (LDAIIITCWIILNAICVACGL), 263–283 (SYLSFLMLGWVFIVSGASFIM), 316–336 (WTVFYWAWWVIYAIQMSIFLA), 347–367 (LCFGMVLGLTASTWILWTVLG), 398–418 (WAALPLSTATIWGFFILCFIA), 446–466 (LLVRIGWSILVGIIGIVLLAL), and 475–495 (AIIAGGCPLFFVNIMVTLSFI).

The protein belongs to the BCCT transporter (TC 2.A.15) family. CaiT subfamily. Homotrimer.

It localises to the cell inner membrane. It carries out the reaction 4-(trimethylamino)butanoate(in) + (R)-carnitine(out) = 4-(trimethylamino)butanoate(out) + (R)-carnitine(in). Its pathway is amine and polyamine metabolism; carnitine metabolism. Catalyzes the exchange of L-carnitine for gamma-butyrobetaine. This chain is L-carnitine/gamma-butyrobetaine antiporter, found in Escherichia coli O8 (strain IAI1).